The sequence spans 455 residues: tRNA-2-methylthio-N(6)-dimethylallyladenosine synthase (455 aa).

One can recognise an MTTase N-terminal domain in the interval 18-136 (KLFFIQTYGC…FPEYLNRVKT (119 aa)). 6 residues coordinate [4Fe-4S] cluster: Cys-27, Cys-63, Cys-97, Cys-173, Cys-177, and Cys-180. The 231-residue stretch at 159–389 (RKSDIKGFVT…VEIVNTGIAK (231 aa)) folds into the Radical SAM core domain. Residues 392 to 455 (KDAEGKIYEV…SFSLIGEVEK (64 aa)) enclose the TRAM domain.

The protein belongs to the methylthiotransferase family. MiaB subfamily. Monomer. [4Fe-4S] cluster serves as cofactor.

Its subcellular location is the cytoplasm. The catalysed reaction is N(6)-dimethylallyladenosine(37) in tRNA + (sulfur carrier)-SH + AH2 + 2 S-adenosyl-L-methionine = 2-methylsulfanyl-N(6)-dimethylallyladenosine(37) in tRNA + (sulfur carrier)-H + 5'-deoxyadenosine + L-methionine + A + S-adenosyl-L-homocysteine + 2 H(+). Its function is as follows. Catalyzes the methylthiolation of N6-(dimethylallyl)adenosine (i(6)A), leading to the formation of 2-methylthio-N6-(dimethylallyl)adenosine (ms(2)i(6)A) at position 37 in tRNAs that read codons beginning with uridine. The protein is tRNA-2-methylthio-N(6)-dimethylallyladenosine synthase of Clostridium beijerinckii (strain ATCC 51743 / NCIMB 8052) (Clostridium acetobutylicum).